The following is a 1897-amino-acid chain: Spectinabilin polyketide synthase system protein NorA (1897 aa).

In terms of domain architecture, Ketosynthase family 3 (KS3) spans 112 to 536; the sequence is EEPIAIVGMG…GTNAHIILEQ (425 aa). Residues Cys283, His418, and His458 each act as for beta-ketoacyl synthase activity in the active site. The tract at residues 538-563 is disordered; sequence APEPERPHAPEADGEPRPLPWPVSGH. Residues 540–553 are compositionally biased toward basic and acidic residues; that stretch reads EPERPHAPEADGEP. A Malonyl-CoA:ACP transacylase (MAT) domain is found at 644-962; the sequence is FVFPGQGSQW…VAEAHVHGVA (319 aa). An N-terminal hotdog fold region spans residues 1012–1139; the sequence is HPLLGAAIPL…GTLAPGGGHP (128 aa). One can recognise a PKS/mFAS DH domain in the interval 1012-1289; it reads HPLLGAAIPL…MRPVTAEALH (278 aa). His1045 functions as the Proton acceptor; for dehydratase activity in the catalytic mechanism. The segment at 1113 to 1152 is disordered; sequence SRPEDAGADEPWTRHAEGTLAPGGGHPRQDPGPWPPTGAR. Residues 1151–1289 are C-terminal hotdog fold; the sequence is AREIDLDDCY…MRPVTAEALH (139 aa). The active-site Proton donor; for dehydratase activity is the Asp1211. Positions 1494–1671 constitute a Ketoreductase (KR) domain; sequence GTVLVTGGLG…GVSMGWGMWA (178 aa). Residues 1777–1852 enclose the Carrier domain; the sequence is ALLLGVVRGH…ALSRYLRTLL (76 aa). The residue at position 1812 (Ser1812) is an O-(pantetheine 4'-phosphoryl)serine. Residues 1854-1873 form a disordered region; sequence PDPAPAPTAPDGQPGPDQAD. Low complexity predominate over residues 1862 to 1871; it reads APDGQPGPDQ.

As to quaternary structure, the spectinabilin polyketide synthase complex is composed of 4 proteins, NorA, NorA', NorB and NorC. The complex comprises 6 modules with a total of 28 catalytic domains catalyzing 7 chain elongations. NorA comprises one module, NorA' two modules, NorB one module and NorC two modules. Requires pantetheine 4'-phosphate as cofactor.

The catalysed reaction is 4-nitrobenzoyl-CoA + 6 (S)-methylmalonyl-CoA + malonyl-CoA + 6 NADPH + 12 H(+) = demethyldeoxyspectinabilin + 7 CO2 + 6 NADP(+) + 8 CoA + 5 H2O. Its pathway is antibiotic biosynthesis. It functions in the pathway polyketide biosynthesis. Functionally, component of a type I modular polyketide synthase (PKS) that generates the backbone of the antibiotic spectinabilin (also known as neoaureothin), a nitroaryl-substituted polyketide metabolite. This PKS system accepts the unusual starter unit 4-nitrobenzoyl-CoA and extends it by 6 molecules of (S)-methylmalonyl-CoA and a single molecule of malonyl-CoA. The first module, NorA, is used twice in an iterative fashion. In Streptomyces orinoci (Streptoverticillium orinoci), this protein is Spectinabilin polyketide synthase system protein NorA.